Consider the following 370-residue polypeptide: MRLFSVVLAVFTLLLPSQAFAQRIKDVASIQGVRSNQLVGYGLVVGLPGTGEQSPFTEQSFRTMLRNFGISLDANTKPKIRNVAAVAVHADLPAFAKPGQTIDITVSSVGEAASLQGGTLLQTFLRGVDGKVYAVAQGSLVVSGFGAQGGDGSRIVVNTPTVGRIPNGAMVEQSVPTGFANGDTLTLNLHYPDFSTAKSLADTINERLGAQPENGYVIAKPIDAASVRVSAPRDVGQRVGFLATLENFEFTPADAPARVVINSRTGTIVIGSDVRLLPAAITHGGLTVTISENQQVTQPNAFADGQTAITTQSIVDVDLADSRMFKFEPGVTLDQLVRAVNEVGAAPGDLMAILEALRHAGALRGELVII.

The N-terminal stretch at 1–21 (MRLFSVVLAVFTLLLPSQAFA) is a signal peptide.

The protein belongs to the FlgI family. The basal body constitutes a major portion of the flagellar organelle and consists of four rings (L,P,S, and M) mounted on a central rod.

It localises to the periplasm. Its subcellular location is the bacterial flagellum basal body. Its function is as follows. Assembles around the rod to form the L-ring and probably protects the motor/basal body from shearing forces during rotation. This is Flagellar P-ring protein from Alteromonas mediterranea (strain DSM 17117 / CIP 110805 / LMG 28347 / Deep ecotype).